The sequence spans 582 residues: Putative BTB/POZ domain-containing protein At3g08660 (582 aa).

Positions 1–21 are disordered; that stretch reads MGSDSTLSLPSSSPPCNNRSS. One can recognise a BTB domain in the interval 36–103; that stretch reads GDIIVVVDGE…CYGINFDITA (68 aa). In terms of domain architecture, NPH3 spans 196 to 466; sequence EMWTEELSAL…VRVLYTEQLR (271 aa). Phosphotyrosine is present on Y407. The segment at 558 to 582 is disordered; that stretch reads GGETRQKVNRKSRSVSERKSSRSGR. Positions 571–582 are enriched in basic and acidic residues; the sequence is SVSERKSSRSGR.

This sequence belongs to the NPH3 family.

It participates in protein modification; protein ubiquitination. Functionally, may act as a substrate-specific adapter of an E3 ubiquitin-protein ligase complex (CUL3-RBX1-BTB) which mediates the ubiquitination and subsequent proteasomal degradation of target proteins. The protein is Putative BTB/POZ domain-containing protein At3g08660 of Arabidopsis thaliana (Mouse-ear cress).